A 101-amino-acid chain; its full sequence is Urease subunit beta (101 aa).

The protein belongs to the urease beta subunit family. Heterotrimer of UreA (gamma), UreB (beta) and UreC (alpha) subunits. Three heterotrimers associate to form the active enzyme.

It localises to the cytoplasm. It catalyses the reaction urea + 2 H2O + H(+) = hydrogencarbonate + 2 NH4(+). It participates in nitrogen metabolism; urea degradation; CO(2) and NH(3) from urea (urease route): step 1/1. The protein is Urease subunit beta of Rhizobium leguminosarum bv. trifolii (strain WSM2304).